Reading from the N-terminus, the 132-residue chain is MSMTDPIADLLVRIKNAAAVGKPTVKLPSSKIKVAIAQVLKDEGYITDLRVTATENNKSELEIVLKYFEGRPVIETLKRFSRSGLRQYRGKTELPKVLGGLGIAIISTSKGIMTDAQAREAGVGGEVLCFVA.

The protein belongs to the universal ribosomal protein uS8 family. Part of the 30S ribosomal subunit. Contacts proteins S5 and S12.

One of the primary rRNA binding proteins, it binds directly to 16S rRNA central domain where it helps coordinate assembly of the platform of the 30S subunit. This Xanthomonas oryzae pv. oryzae (strain MAFF 311018) protein is Small ribosomal subunit protein uS8.